The chain runs to 195 residues: Cysteine/O-acetylserine efflux protein (195 aa).

5 helical membrane-spanning segments follow: residues 47-67, 70-90, 105-125, 142-162, and 177-194; these read SLGF…LAVI, AAVH…AWKI, ISFW…LYGV, VVGV…CWAL, and QLNI…VRIF.

This sequence belongs to the Rht family.

Its subcellular location is the cell inner membrane. The catalysed reaction is O-acetyl-L-serine(in) = O-acetyl-L-serine(out). It catalyses the reaction L-cysteine(in) = L-cysteine(out). Its function is as follows. Exporter of O-acetylserine (OAS) and cysteine. In Shigella boydii serotype 4 (strain Sb227), this protein is Cysteine/O-acetylserine efflux protein (eamB).